Reading from the N-terminus, the 502-residue chain is MVQCKPPQEFSFGPRALKDALISCDLALKQMYTSAFSPSERLFLSEAYNPNRTLFSTLLIHSAYDWLLSRPEAPEDFETFHASLQLRKQSLARKHIYLQPIDLSEGLAGCPLLDHLRSCAEAFFLGLRVKCLPSVAAASINCCSRPSRDTDGLQLHTDGILSFLKNNKPGDALCVLGLTLADLYPHDAWTFTFGRFLPGHEVGVCSFARFSGEFLQAGSSVPDSALLEAAAAGGPETLPRERGRTLCFSALGMVQCCKVTCHELCHLLGLGSCRWLRCLLQGALSLDEVLRRPLDLCPICLRKLHHLLGFRLLERYKRLHAWTRVMVEIWSGQEAGEPSVSEDTLPFSADSGMGCESDTEPVTSPSEPVTPDGWSHPFPDGPEPVSEDGLGSLMASEVSLTLGGPVDAMEEYGQWLTACIQTLEREGAEEELLQVDAAVDALSRWEMFTGQLPVTKQHVPCGKDNVGLRRVLGDKFSSLRRRLSSRRFAKASSSHCRWGAEN.

H262 is a binding site for Zn(2+). The Proton acceptor role is filled by E263. Positions 266, 273, 278, 297, and 300 each coordinate Zn(2+). A disordered region spans residues 336–383 (GEPSVSEDTLPFSADSGMGCESDTEPVTSPSEPVTPDGWSHPFPDGPE).

Belongs to the peptidase M54 family. Zn(2+) is required as a cofactor.

Its function is as follows. Probable zinc metalloprotease. The sequence is that of Archaemetzincin-1 (Amz1) from Mus musculus (Mouse).